The sequence spans 140 residues: Nucleoside diphosphate kinase (140 aa).

The ATP site is built by K11, F59, R87, T93, R104, and N114. The active-site Pros-phosphohistidine intermediate is the H117.

Belongs to the NDK family. As to quaternary structure, homotetramer. Mg(2+) is required as a cofactor.

Its subcellular location is the cytoplasm. The catalysed reaction is a 2'-deoxyribonucleoside 5'-diphosphate + ATP = a 2'-deoxyribonucleoside 5'-triphosphate + ADP. The enzyme catalyses a ribonucleoside 5'-diphosphate + ATP = a ribonucleoside 5'-triphosphate + ADP. Its function is as follows. Major role in the synthesis of nucleoside triphosphates other than ATP. The ATP gamma phosphate is transferred to the NDP beta phosphate via a ping-pong mechanism, using a phosphorylated active-site intermediate. This Rickettsia conorii (strain ATCC VR-613 / Malish 7) protein is Nucleoside diphosphate kinase.